A 200-amino-acid chain; its full sequence is LexA repressor (200 aa).

Active-site for autocatalytic cleavage activity residues include Ser-121 and Lys-158.

The protein belongs to the peptidase S24 family. Homodimer.

It catalyses the reaction Hydrolysis of Ala-|-Gly bond in repressor LexA.. Binds a consensus sequence 5'-TGTTC-N(4)-GAACA-3'; some genes have a tandem consensus sequence and their binding is cooperative. Binds to the promoters of a number of genes, including lexA and splB. Represses a number of genes involved in the response to DNA damage (SOS response). In Opitutus terrae (strain DSM 11246 / JCM 15787 / PB90-1), this protein is LexA repressor.